The primary structure comprises 509 residues: Leucine-rich repeat-containing protein 14 (509 aa).

The stretch at 111–146 (RQRLRLLDMTGMQEEGLEQNPDTMSLWSRTVTLAKA) is one LRR 1; degenerate repeat. Residues 210–234 (RLQCRDFRAEELSLRSTAGLLELLN) form an LRR 2; degenerate repeat. The stretch at 235–262 (PGSVRQIDLRFNNLGLSGLNVLLPHMAK) is one LRR 3; degenerate repeat. The LRR 4; degenerate repeat unit spans residues 263 to 298 (FSHLQSLKLPYSNVDVRRLSPVMEEGLQSFASQLGQ). LRR repeat units lie at residues 299-323 (LGALKELNLGSSRLSGRLRQLLGGL), 324-355 (QRPLESLELAFCSLLPMDLSYLSQSSHMSSLR), 356-374 (KLDLSGNNLSEFLLTPFLH), 380-407 (SGHLLYLDVMECKLADAHLSALMPILCR), and 408-432 (CSWLRYLGLFCNPISSDGLRMVLQN).

The protein belongs to the PRAME family. LRRC14 subfamily.

Its subcellular location is the cytoplasm. The sequence is that of Leucine-rich repeat-containing protein 14 from Xenopus laevis (African clawed frog).